Here is a 292-residue protein sequence, read N- to C-terminus: Phosphatidylserine decarboxylase proenzyme (292 aa).

Active-site charge relay system; for autoendoproteolytic cleavage activity residues include D89, H146, and S252. S252 acts as the Schiff-base intermediate with substrate; via pyruvic acid; for decarboxylase activity in catalysis. S252 carries the pyruvic acid (Ser); by autocatalysis modification.

Belongs to the phosphatidylserine decarboxylase family. PSD-B subfamily. Prokaryotic type I sub-subfamily. As to quaternary structure, heterodimer of a large membrane-associated beta subunit and a small pyruvoyl-containing alpha subunit. Pyruvate is required as a cofactor. In terms of processing, is synthesized initially as an inactive proenzyme. Formation of the active enzyme involves a self-maturation process in which the active site pyruvoyl group is generated from an internal serine residue via an autocatalytic post-translational modification. Two non-identical subunits are generated from the proenzyme in this reaction, and the pyruvate is formed at the N-terminus of the alpha chain, which is derived from the carboxyl end of the proenzyme. The autoendoproteolytic cleavage occurs by a canonical serine protease mechanism, in which the side chain hydroxyl group of the serine supplies its oxygen atom to form the C-terminus of the beta chain, while the remainder of the serine residue undergoes an oxidative deamination to produce ammonia and the pyruvoyl prosthetic group on the alpha chain. During this reaction, the Ser that is part of the protease active site of the proenzyme becomes the pyruvoyl prosthetic group, which constitutes an essential element of the active site of the mature decarboxylase.

It localises to the cell membrane. The enzyme catalyses a 1,2-diacyl-sn-glycero-3-phospho-L-serine + H(+) = a 1,2-diacyl-sn-glycero-3-phosphoethanolamine + CO2. The protein operates within phospholipid metabolism; phosphatidylethanolamine biosynthesis; phosphatidylethanolamine from CDP-diacylglycerol: step 2/2. Its function is as follows. Catalyzes the formation of phosphatidylethanolamine (PtdEtn) from phosphatidylserine (PtdSer). In Shewanella baltica (strain OS185), this protein is Phosphatidylserine decarboxylase proenzyme.